The sequence spans 112 residues: Outer membrane protein assembly factor BamE (112 aa).

The first 19 residues, 1–19, serve as a signal peptide directing secretion; that stretch reads MRCKTLTAAAAVLLMLTAG. Cys20 is lipidated: N-palmitoyl cysteine. Cys20 carries the S-diacylglycerol cysteine lipid modification.

It belongs to the BamE family. As to quaternary structure, part of the Bam complex, which is composed of the outer membrane protein BamA, and four lipoproteins BamB, BamC, BamD and BamE.

It is found in the cell outer membrane. Its function is as follows. Part of the outer membrane protein assembly complex, which is involved in assembly and insertion of beta-barrel proteins into the outer membrane. The chain is Outer membrane protein assembly factor BamE from Salmonella typhimurium (strain LT2 / SGSC1412 / ATCC 700720).